The primary structure comprises 462 residues: ATP synthase subunit beta (462 aa).

152 to 159 lines the ATP pocket; sequence GGAGVGKT.

The protein belongs to the ATPase alpha/beta chains family. In terms of assembly, F-type ATPases have 2 components, CF(1) - the catalytic core - and CF(0) - the membrane proton channel. CF(1) has five subunits: alpha(3), beta(3), gamma(1), delta(1), epsilon(1). CF(0) has three main subunits: a(1), b(2) and c(9-12). The alpha and beta chains form an alternating ring which encloses part of the gamma chain. CF(1) is attached to CF(0) by a central stalk formed by the gamma and epsilon chains, while a peripheral stalk is formed by the delta and b chains.

It localises to the cell inner membrane. The catalysed reaction is ATP + H2O + 4 H(+)(in) = ADP + phosphate + 5 H(+)(out). In terms of biological role, produces ATP from ADP in the presence of a proton gradient across the membrane. The catalytic sites are hosted primarily by the beta subunits. This Shewanella amazonensis (strain ATCC BAA-1098 / SB2B) protein is ATP synthase subunit beta.